The following is a 304-amino-acid chain: 1D-myo-inositol 2-acetamido-2-deoxy-alpha-D-glucopyranoside deacetylase 2 (304 aa).

His-17, Asp-20, and His-152 together coordinate Zn(2+).

Belongs to the MshB deacetylase family. It depends on Zn(2+) as a cofactor.

It catalyses the reaction 1D-myo-inositol 2-acetamido-2-deoxy-alpha-D-glucopyranoside + H2O = 1D-myo-inositol 2-amino-2-deoxy-alpha-D-glucopyranoside + acetate. Its function is as follows. Catalyzes the deacetylation of 1D-myo-inositol 2-acetamido-2-deoxy-alpha-D-glucopyranoside (GlcNAc-Ins) in the mycothiol biosynthesis pathway. This Catenulispora acidiphila (strain DSM 44928 / JCM 14897 / NBRC 102108 / NRRL B-24433 / ID139908) protein is 1D-myo-inositol 2-acetamido-2-deoxy-alpha-D-glucopyranoside deacetylase 2.